We begin with the raw amino-acid sequence, 251 residues long: MAVKLDPIHQFELKPLVSFGHIGHQHIAFTQSALYMFAAVGIIALITLVATRQRALVPGRMQSLAEAFYEFIASTVHQSAGHGSERFVPLVFSLFMFVLVLNLFGMIPYAFTVTSHIIVTFMLALVVILTVVIYGFMAHGVHFLDLFVPPGVPGWLKPLIVAIEVVSFISRPISLSVRLFANMLAGHIALKIFAGFVPALLAAGIWGILSPLPLALSVAITALEMLVAVLQAYVFATLTSIYLSDALHPGH.

The next 7 membrane-spanning stretches (helical) occupy residues 29–49, 56–73, 87–107, 117–137, 159–181, 192–212, and 218–238; these read FTQS…ITLV, LVPG…EFIA, FVPL…FGMI, IIVT…YGFM, LIVA…RLFA, IFAG…LSPL, and VAIT…FATL.

Belongs to the ATPase A chain family. F-type ATPases have 2 components, CF(1) - the catalytic core - and CF(0) - the membrane proton channel. CF(1) has five subunits: alpha(3), beta(3), gamma(1), delta(1), epsilon(1). CF(0) has three main subunits: a(1), b(2) and c(9-12). The alpha and beta chains form an alternating ring which encloses part of the gamma chain. CF(1) is attached to CF(0) by a central stalk formed by the gamma and epsilon chains, while a peripheral stalk is formed by the delta and b chains.

The protein localises to the cell inner membrane. Functionally, key component of the proton channel; it plays a direct role in the translocation of protons across the membrane. The chain is ATP synthase subunit a from Methylobacterium sp. (strain 4-46).